The following is a 667-amino-acid chain: Probable oxidoreductase YyaE (667 aa).

The region spanning Ser-2 to Asp-59 is the 4Fe-4S Mo/W bis-MGD-type domain. Positions 9, 13, 17, and 45 each coordinate [4Fe-4S] cluster.

This sequence belongs to the prokaryotic molybdopterin-containing oxidoreductase family. Mo-bis(molybdopterin guanine dinucleotide) serves as cofactor.

The sequence is that of Probable oxidoreductase YyaE (yyaE) from Bacillus subtilis (strain 168).